A 372-amino-acid chain; its full sequence is Putative aminopeptidase SgcX (372 aa).

Residues His-67 and Asp-180 each coordinate a divalent metal cation. Residue Glu-212 is the Proton acceptor of the active site. Positions 213, 235, and 329 each coordinate a divalent metal cation.

This sequence belongs to the peptidase M42 family. A divalent metal cation is required as a cofactor.

The protein is Putative aminopeptidase SgcX (sgcX) of Salmonella typhi.